A 427-amino-acid polypeptide reads, in one-letter code: Gustatory receptor for sugar taste 43a (427 aa).

The Cytoplasmic portion of the chain corresponds to 1–37; the sequence is MEISQPSIGIFYISKVLALAPYATVRNSKGRVEIGRS. The helical transmembrane segment at 38 to 63 threads the bilayer; that stretch reads WLFTVYSATLTVVMVFLTYRGLLFDA. Over 64-75 the chain is Extracellular; the sequence is NSEIPVRMKSAT. The beta-D-fructose site is built by Arg-70 and Asp-83. Residues 76-96 traverse the membrane as a helical segment; it reads SKVVTALDVSVVVMAIVSGVY. At 97-135 the chain is on the cytoplasmic side; the sequence is CGLFSLNDTLELNDRLNKIDNTLNAYNNFRRDRWRALGM. Residues 136 to 158 form a helical membrane-spanning segment; it reads AAVSLLAISILVGLDVGTWMRIA. Residues 159 to 168 lie on the Extracellular side of the membrane; the sequence is QDMNIAQSDT. A helical transmembrane segment spans residues 169–193; sequence ELNVHWYIPFYSLYFILTGLQVNIA. Tyr-182 is a beta-D-fructose binding site. The Cytoplasmic portion of the chain corresponds to 194-293; the sequence is NTAYGLGRRF…CVHLLSNSFG (100 aa). A helical transmembrane segment spans residues 294-316; that stretch reads IAVLFILVSCLLHLVATAYFLFL. Thr-310 is a beta-D-fructose binding site. Residues 317–324 are Extracellular-facing; the sequence is ELLSKRDN. The chain crosses the membrane as a helical span at residues 325–346; the sequence is GYLWVQMLWICFHFLRLLMVVE. Residue His-337 coordinates beta-D-fructose. Topologically, residues 347–402 are cytoplasmic; sequence PCHLAARESRKTIQIVCEIERKVHEPILAEAVKKFWQQLLVVDADFSACGLCRVNR. Residues 403 to 423 traverse the membrane as a helical segment; that stretch reads TILTSFASAIATYLVILIQFQ. Gln-421 lines the Ca(2+) pocket. Residues 424 to 427 are Extracellular-facing; sequence RTNG.

This sequence belongs to the insect chemoreceptor superfamily. Gustatory receptor (GR) family. Gr21a subfamily. As to quaternary structure, homotetramer. Expressed in the adult labellar chemosensory neurons and in the adult head, abdomen, leg and wing. In larvae, is expressed in taste organs, as well as the brain and the gastrointestinal system.

Its subcellular location is the cell membrane. Gustatory receptor which mediates acceptance or avoidance behavior, depending on its substrates. Gr43a is the main sugar receptor in larvae. Functions as a narrowly tuned fructose receptor in taste neurons but also as a fructose receptor in the brain. Necessary and sufficient to sense hemolymph fructose and promote feeding in hungry flies but suppress feeding in satiated flies. This is Gustatory receptor for sugar taste 43a (Gr43a) from Drosophila melanogaster (Fruit fly).